We begin with the raw amino-acid sequence, 263 residues long: Tryptophan synthase alpha chain (263 aa).

Catalysis depends on proton acceptor residues E49 and D60.

The protein belongs to the TrpA family. As to quaternary structure, tetramer of two alpha and two beta chains.

The catalysed reaction is (1S,2R)-1-C-(indol-3-yl)glycerol 3-phosphate + L-serine = D-glyceraldehyde 3-phosphate + L-tryptophan + H2O. It participates in amino-acid biosynthesis; L-tryptophan biosynthesis; L-tryptophan from chorismate: step 5/5. The alpha subunit is responsible for the aldol cleavage of indoleglycerol phosphate to indole and glyceraldehyde 3-phosphate. The sequence is that of Tryptophan synthase alpha chain from Cereibacter sphaeroides (strain KD131 / KCTC 12085) (Rhodobacter sphaeroides).